The primary structure comprises 594 residues: Neuronal PAS domain-containing protein 1 (594 aa).

A bHLH domain is found at 45-98 (QRKEKSRNAARWRRGKENLEFFELAKLLPLPGAISSQLDKASIVRLSVTYLRLR). Residues 135 to 205 (EQHLGGHILQ…EQLGLRAASI (71 aa)) form the PAS 1 domain. The disordered stretch occupies residues 206–237 (GPPTPPSVSSSSSSSSSSLVDTPEIEASPTEA). Over residues 212–223 (SVSSSSSSSSSS) the composition is skewed to low complexity. Residues 294–360 (APLAELPLHG…IRQSHLDLLD (67 aa)) enclose the PAS 2 domain. A PAC domain is found at 366 to 409 (TGYYRWLQRAGGFVWLQSVATVAGNGKSTGEHHVLWVSHVLSNA). A disordered region spans residues 427-498 (QEEPSRPGPE…DPPAPPRPEF (72 aa)). Residues 453 to 480 (DQDKDKDPQARGKRIKVEASPKEARGSE) show a composition bias toward basic and acidic residues.

Efficient DNA binding requires dimerization with another bHLH protein. Interacts with ARNT; forms a heterodimer that binds core DNA sequence 5'-[AG]CGTG-3' within the hypoxia response element (HRE) leading to a transcriptional repressor on its target gene TH. In terms of tissue distribution, expressed in brain in inhibitory interneurons. Also found in spinal cord.

The protein localises to the nucleus. Functionally, may control regulatory pathways relevant to schizophrenia and to psychotic illness. May play a role in late central nervous system development by modulating EPO expression in response to cellular oxygen level. Forms a heterodimer that binds core DNA sequence 5'-TACGTG-3' within the hypoxia response element (HRE) leading to transcriptional repression on its target gene TH. This chain is Neuronal PAS domain-containing protein 1 (Npas1), found in Mus musculus (Mouse).